Here is a 569-residue protein sequence, read N- to C-terminus: MTAPKIEAVYTVGAYLLDRLAELGVTEIFGVPGDYTLEFLDHIVAHPTIRWVGNANELNAGYAADGYGRLRGISALVTTFGVGELSAANAIAGSYAEHVPVVHIVGAPPKDAQSTHRALHHSLGDGDFEHFIRISSEITCSQANLTTATACKEIDRVLSEVRKHKRPGYILLSTDVARFPTEPPAAPLPGHTDGTSPRALSLFIDAATKLIADKRMTVLADLLVHRLQVVKELETLLTADVVPYATLMWGKSLLDESSPNFLGIYAGAASTEAVRAAIEQAPVLVTAGVVFTDMVSGFFSQRIDPARTIDVGQYQSSVADKVFTPLEMGDALEALASILVRRGVSSPPVELPPGNPTADTPSPTQRLTQQILWDRLCAALTPGNVVLADQGTAFYGMVEHRLPRGVTFIGQPLWGSIGYTLPAALGAGLAHRNRRTVLLLGDGAAQLTIQELGSFYREGLSPVIVVVNNDGYTIERAIHGATAPYNNIARWRWTDIPGALGVANHSSFRAETYGELDEAFAVAAELKDQMVFVEVIVPKLDLPSLLTALTRPAQDSNRIFQLPNPGWDN.

Glu-57 contacts thiamine diphosphate. A thiamine pyrophosphate binding region spans residues 392–474; sequence TAFYGMVEHR…VVVNNDGYTI (83 aa). The Mg(2+) site is built by Asp-442, Asn-469, and Gly-471.

The protein belongs to the TPP enzyme family. A metal cation is required as a cofactor. The cofactor is thiamine diphosphate.

Its function is as follows. Decarboxylates branched-chain and aromatic alpha-keto acids to aldehydes. The chain is Alpha-keto-acid decarboxylase (kdc) from Mycobacterium leprae (strain TN).